The sequence spans 466 residues: Cysteine--tRNA ligase (466 aa).

Residue Cys28 participates in Zn(2+) binding. Positions 30 to 40 (PTVYNFFHIGN) match the 'HIGH' region motif. Residues Cys208, His233, and Glu237 each coordinate Zn(2+). A 'KMSKS' region motif is present at residues 265–269 (KMSKS). ATP is bound at residue Lys268.

This sequence belongs to the class-I aminoacyl-tRNA synthetase family. Monomer. It depends on Zn(2+) as a cofactor.

It is found in the cytoplasm. The enzyme catalyses tRNA(Cys) + L-cysteine + ATP = L-cysteinyl-tRNA(Cys) + AMP + diphosphate. In Clostridium perfringens (strain 13 / Type A), this protein is Cysteine--tRNA ligase.